Consider the following 317-residue polypeptide: Olfactory receptor 2B11 (317 aa).

The Extracellular segment spans residues 1 to 29 (MKSDNHSFLGDSPKAFILLGVSDRPWLEL). Residue asparagine 5 is glycosylated (N-linked (GlcNAc...) asparagine). The chain crosses the membrane as a helical span at residues 30 to 53 (PLFVVLLLSYVLAMLGNVAIILAS). The Cytoplasmic segment spans residues 54–61 (RVDPQLHS). A helical transmembrane segment spans residues 62-83 (PMYIFLSHLSFLDLCYTTTTVP). The Extracellular portion of the chain corresponds to 84–104 (QMLVNMGSSQKTISYGGCTVQ). A disulfide bridge links cysteine 101 with cysteine 193. The chain crosses the membrane as a helical span at residues 105–124 (YAVFHWLGCTECIVLAAMAL). Residues 125 to 143 (DRYVAICKPLHYAVLMHRA) are Cytoplasmic-facing. The chain crosses the membrane as a helical span at residues 144 to 162 (LCQQLVALAWLSGFGNSFV). Residues 163–199 (QVVLTVQLPFCGRQVLNNFFCEVPAVIKLSCADTAVN) lie on the Extracellular side of the membrane. N-linked (GlcNAc...) asparagine glycosylation is present at asparagine 199. Residues 200-223 (DTILAVLVAFFVLVPLALILLSYG) form a helical membrane-spanning segment. Topologically, residues 224-240 (FIARAVLRIQSSKGRHK) are cytoplasmic. Residues 241–263 (AFGTCSSHLMIVSLFYLPAIYMY) traverse the membrane as a helical segment. The Extracellular portion of the chain corresponds to 264-276 (LQPPSSYSQEQGK). A helical membrane pass occupies residues 277–296 (FISLFYSIITPTLNPFTYTL). Topologically, residues 297-317 (RNKDMKGALRRLLARIWRLCG) are cytoplasmic.

This sequence belongs to the G-protein coupled receptor 1 family.

It is found in the cell membrane. Its function is as follows. Odorant receptor. The sequence is that of Olfactory receptor 2B11 (OR2B11) from Homo sapiens (Human).